The primary structure comprises 191 residues: Protein Ves (191 aa).

It belongs to the Ves family.

The chain is Protein Ves from Shigella flexneri serotype 5b (strain 8401).